The chain runs to 255 residues: Imidazole glycerol phosphate synthase subunit HisF (255 aa).

Residues aspartate 11 and aspartate 130 contribute to the active site.

Belongs to the HisA/HisF family. Heterodimer of HisH and HisF.

It localises to the cytoplasm. The catalysed reaction is 5-[(5-phospho-1-deoxy-D-ribulos-1-ylimino)methylamino]-1-(5-phospho-beta-D-ribosyl)imidazole-4-carboxamide + L-glutamine = D-erythro-1-(imidazol-4-yl)glycerol 3-phosphate + 5-amino-1-(5-phospho-beta-D-ribosyl)imidazole-4-carboxamide + L-glutamate + H(+). It participates in amino-acid biosynthesis; L-histidine biosynthesis; L-histidine from 5-phospho-alpha-D-ribose 1-diphosphate: step 5/9. Its function is as follows. IGPS catalyzes the conversion of PRFAR and glutamine to IGP, AICAR and glutamate. The HisF subunit catalyzes the cyclization activity that produces IGP and AICAR from PRFAR using the ammonia provided by the HisH subunit. This Akkermansia muciniphila (strain ATCC BAA-835 / DSM 22959 / JCM 33894 / BCRC 81048 / CCUG 64013 / CIP 107961 / Muc) protein is Imidazole glycerol phosphate synthase subunit HisF.